Reading from the N-terminus, the 346-residue chain is tRNA N6-adenosine threonylcarbamoyltransferase (346 aa).

Fe cation-binding residues include histidine 110 and histidine 114. Substrate is bound by residues leucine 132–glycine 136, aspartate 165, glycine 178, and asparagine 274. A Fe cation-binding site is contributed by aspartate 298.

Belongs to the KAE1 / TsaD family. The cofactor is Fe(2+).

The protein localises to the cytoplasm. It catalyses the reaction L-threonylcarbamoyladenylate + adenosine(37) in tRNA = N(6)-L-threonylcarbamoyladenosine(37) in tRNA + AMP + H(+). In terms of biological role, required for the formation of a threonylcarbamoyl group on adenosine at position 37 (t(6)A37) in tRNAs that read codons beginning with adenine. Is involved in the transfer of the threonylcarbamoyl moiety of threonylcarbamoyl-AMP (TC-AMP) to the N6 group of A37, together with TsaE and TsaB. TsaD likely plays a direct catalytic role in this reaction. This chain is tRNA N6-adenosine threonylcarbamoyltransferase, found in Borreliella afzelii (strain PKo) (Borrelia afzelii).